A 255-amino-acid polypeptide reads, in one-letter code: uncharacterized protein (255 aa).

The signal sequence occupies residues 1–23 (MKRLNKLVLGINLLFLVISITAG). A lipid anchor (N-palmitoyl cysteine) is attached at Cys24. The S-diacylglycerol cysteine moiety is linked to residue Cys24.

It belongs to the staphylococcal tandem lipoprotein family.

The protein localises to the cell membrane. This is an uncharacterized protein from Staphylococcus aureus (strain MRSA252).